We begin with the raw amino-acid sequence, 377 residues long: Chaperone protein DnaJ (377 aa).

The J domain occupies 4-69 (DYYEALGVTR…QKRAAYDRFG (66 aa)). The CR-type zinc-finger motif lies at 135–213 (GKTAQIRVPT…CHGQGRVTQE (79 aa)). Zn(2+)-binding residues include cysteine 148, cysteine 151, cysteine 165, cysteine 168, cysteine 187, cysteine 190, cysteine 201, and cysteine 204. 4 CXXCXGXG motif repeats span residues 148-155 (CDECSGSG), 165-172 (CTMCSGSG), 187-194 (CPGCNGRG), and 201-208 (CEKCHGQG).

The protein belongs to the DnaJ family. Homodimer. Zn(2+) is required as a cofactor.

It is found in the cytoplasm. In terms of biological role, participates actively in the response to hyperosmotic and heat shock by preventing the aggregation of stress-denatured proteins and by disaggregating proteins, also in an autonomous, DnaK-independent fashion. Unfolded proteins bind initially to DnaJ; upon interaction with the DnaJ-bound protein, DnaK hydrolyzes its bound ATP, resulting in the formation of a stable complex. GrpE releases ADP from DnaK; ATP binding to DnaK triggers the release of the substrate protein, thus completing the reaction cycle. Several rounds of ATP-dependent interactions between DnaJ, DnaK and GrpE are required for fully efficient folding. Also involved, together with DnaK and GrpE, in the DNA replication of plasmids through activation of initiation proteins. This chain is Chaperone protein DnaJ, found in Brucella ovis (strain ATCC 25840 / 63/290 / NCTC 10512).